A 62-amino-acid polypeptide reads, in one-letter code: DNA-directed RNA polymerase subunit Rpo10 (62 aa).

Positions 6, 9, 43, and 44 each coordinate Zn(2+).

This sequence belongs to the archaeal Rpo10/eukaryotic RPB10 RNA polymerase subunit family. In terms of assembly, part of the RNA polymerase complex. The cofactor is Zn(2+).

The protein localises to the cytoplasm. The catalysed reaction is RNA(n) + a ribonucleoside 5'-triphosphate = RNA(n+1) + diphosphate. DNA-dependent RNA polymerase (RNAP) catalyzes the transcription of DNA into RNA using the four ribonucleoside triphosphates as substrates. The protein is DNA-directed RNA polymerase subunit Rpo10 of Methanosphaerula palustris (strain ATCC BAA-1556 / DSM 19958 / E1-9c).